We begin with the raw amino-acid sequence, 544 residues long: Cytochrome P450 monooxygenase cle2 (544 aa).

Residues 19-39 (LGLLIGLSLILSITWTAYTIL) form a helical membrane-spanning segment. The interval 273–305 (RTQQVEQSIEKNTKNEKKEDEDEDQNEDEETPG) is disordered. Residues 280-290 (SIEKNTKNEKK) show a composition bias toward basic and acidic residues. Over residues 291–304 (EDEDEDQNEDEETP) the composition is skewed to acidic residues. A heme-binding site is contributed by C478.

Belongs to the cytochrome P450 family. It depends on heme as a cofactor.

The protein resides in the membrane. The protein operates within secondary metabolite biosynthesis; terpenoid biosynthesis. In terms of biological role, cytochrome P450 monooxygenase; part of the cluster A that mediates the biosynthesis of chevalone E and its oxidized derivatives that possess a unique five-membered lactone ring and can synergistically enhance the cytotoxicity of doxorubicin (DOX) in breast cancer cells. Within the pathway, cle2 is involved in hydroxylation of the chavalone E scaffold at position C-20 and contributes with cle4 to the production of seven oxidation derivatives. The molecular scaffold is commonly biosynthesized by a series of enzymes including the non-reducing polyketide synthase (NR-PKS) cle1 that produces the alpha-pyrone triacetic acid lactone (TAL); The membrane-bound prenyltransferase cle5 that accepts TAL as its substrate to perform a C-3 geranylgeranylation reaction, in which the pathway-dedicated GGPS cle6 is required to provide GGPP, the other substrate of cle5; the FAD-dependent monooxygenase Cle3 that forms an (S)-epoxide ring at the terminal olefin of the geranylgeranyl group; and the terpene cyclase Cle7 that catalyzes the cyclization of the prenyl group that yields the pentacyclic pathway intermediate chevalone E. Chevalone E can derivatize into seven new oxidized analogs by the cytochrome P450 monooxygenases cle2 (acting at C-20) and cle4 (acting at C-11 and C-12). The sequence is that of Cytochrome P450 monooxygenase cle2 from Aspergillus versicolor.